A 377-amino-acid polypeptide reads, in one-letter code: 23S rRNA (uracil(747)-C(5))-methyltransferase RlmC (377 aa).

4 residues coordinate [4Fe-4S] cluster: Cys3, Cys11, Cys14, and Cys87. Positions 212, 241, 262, and 307 each coordinate S-adenosyl-L-methionine. Cys334 acts as the Nucleophile in catalysis.

Belongs to the class I-like SAM-binding methyltransferase superfamily. RNA M5U methyltransferase family. RlmC subfamily.

The enzyme catalyses uridine(747) in 23S rRNA + S-adenosyl-L-methionine = 5-methyluridine(747) in 23S rRNA + S-adenosyl-L-homocysteine + H(+). In terms of biological role, catalyzes the formation of 5-methyl-uridine at position 747 (m5U747) in 23S rRNA. The sequence is that of 23S rRNA (uracil(747)-C(5))-methyltransferase RlmC from Proteus mirabilis (strain HI4320).